Consider the following 276-residue polypeptide: 4-hydroxy-tetrahydrodipicolinate reductase (276 aa).

NAD(+) contacts are provided by residues 10–15 (GALGKM), aspartate 36, and 109–111 (GTT). Catalysis depends on histidine 165, which acts as the Proton donor/acceptor. Residue histidine 166 participates in (S)-2,3,4,5-tetrahydrodipicolinate binding. Residue lysine 169 is the Proton donor of the active site. 175–176 (GT) provides a ligand contact to (S)-2,3,4,5-tetrahydrodipicolinate.

It belongs to the DapB family.

Its subcellular location is the cytoplasm. It catalyses the reaction (S)-2,3,4,5-tetrahydrodipicolinate + NAD(+) + H2O = (2S,4S)-4-hydroxy-2,3,4,5-tetrahydrodipicolinate + NADH + H(+). It carries out the reaction (S)-2,3,4,5-tetrahydrodipicolinate + NADP(+) + H2O = (2S,4S)-4-hydroxy-2,3,4,5-tetrahydrodipicolinate + NADPH + H(+). Its pathway is amino-acid biosynthesis; L-lysine biosynthesis via DAP pathway; (S)-tetrahydrodipicolinate from L-aspartate: step 4/4. In terms of biological role, catalyzes the conversion of 4-hydroxy-tetrahydrodipicolinate (HTPA) to tetrahydrodipicolinate. In Prochlorococcus marinus (strain SARG / CCMP1375 / SS120), this protein is 4-hydroxy-tetrahydrodipicolinate reductase.